A 283-amino-acid chain; its full sequence is DegV domain-containing protein lin2658 (283 aa).

Positions 5 to 282 (IAVVTDSTTY…EGALGLTWSI (278 aa)) constitute a DegV domain. Ser63 and Ser96 together coordinate hexadecanoate.

May bind long-chain fatty acids, such as palmitate, and may play a role in lipid transport or fatty acid metabolism. The protein is DegV domain-containing protein lin2658 of Listeria innocua serovar 6a (strain ATCC BAA-680 / CLIP 11262).